Here is a 350-residue protein sequence, read N- to C-terminus: Melatonin receptor type 1A-A (350 aa).

Residues 1 to 29 (MFMNGSSLNSSALDPSEQALQRPPWVTTT) lie on the Extracellular side of the membrane. N4 and N9 each carry an N-linked (GlcNAc...) asparagine glycan. Residues 30 to 50 (LGCFLIFTIVVDILGNLLVIF) traverse the membrane as a helical segment. Residues 51-63 (SVYRNKKLQNAGN) are Cytoplasmic-facing. The chain crosses the membrane as a helical span at residues 64–84 (IFVVSLAVADLVVAIYPYPLV). The Extracellular portion of the chain corresponds to 85–101 (LTSIFHRGWNLGYMHCQ). Residues C100 and C177 are joined by a disulfide bond. A helical transmembrane segment spans residues 102-122 (ISGFLMGVSVIGSIFNITGIA). At 123–144 (INCYCYICHSLKYDKLYSDKNS) the chain is on the cytoplasmic side. The helical transmembrane segment at 145–165 (VCYVLLIWALTVLAIVPNLFV) threads the bilayer. Topologically, residues 166–187 (GSLQYDPRVYSCTFEQSASSAY) are extracellular. A helical transmembrane segment spans residues 188-208 (TIAVVFFHFILPIMIVTYCYL). Topologically, residues 209 to 240 (RIWVLVIQVRRRVKNDNRPKITPHDVRNFVTM) are cytoplasmic. The helical transmembrane segment at 241–261 (FVVFVLFAVCWAPLNFIGLAV) threads the bilayer. Residues 262 to 267 (AISPER) lie on the Extracellular side of the membrane. Residues 268-288 (VVPLIPEWLFVASYFMAYFNS) traverse the membrane as a helical segment. Over 289–350 (CLNAIVYGVL…NNNQVKVDSV (62 aa)) the chain is Cytoplasmic.

It belongs to the G-protein coupled receptor 1 family.

Its subcellular location is the cell membrane. Functionally, high affinity receptor for melatonin. The activity of this receptor is mediated by pertussis toxin sensitive G proteins that inhibits adenylate cyclase activity. This Danio rerio (Zebrafish) protein is Melatonin receptor type 1A-A (mtnr1aa).